Reading from the N-terminus, the 169-residue chain is Mitochondrial ATP-independent inner membrane protease subunit 1b (169 aa).

Residues Ser47 and Lys91 contribute to the active site.

Belongs to the peptidase S26 family. IMP1 subfamily. As to quaternary structure, heterodimer of 2 subunits, IMP1A/B and IMP12.

The protein resides in the mitochondrion inner membrane. Catalyzes the removal of transit peptides required for the targeting of proteins from the mitochondrial matrix, across the inner membrane, into the inter-membrane space. This is Mitochondrial ATP-independent inner membrane protease subunit 1b from Arabidopsis thaliana (Mouse-ear cress).